Here is a 242-residue protein sequence, read N- to C-terminus: UPF0309 protein BAbS19_II03080 (242 aa).

The 185-residue stretch at 30–214 (AADLIAAAAR…ARLVGEGDAP (185 aa)) folds into the SIS domain.

The protein belongs to the UPF0309 family.

In Brucella abortus (strain S19), this protein is UPF0309 protein BAbS19_II03080.